The chain runs to 299 residues: Beta-lactamase VEB-1 (299 aa).

A signal peptide spans 1–23; sequence MKIVKRILLVLLSLFFTIVYSNA. Catalysis depends on serine 68, which acts as the Nucleophile; acyl-ester intermediate. A beta-lactam contacts are provided by lysine 71, serine 131, and glutamate 167. The active-site Proton acceptor is glutamate 167.

This sequence belongs to the class-A beta-lactamase family.

The enzyme catalyses a beta-lactam + H2O = a substituted beta-amino acid. With respect to regulation, inhibited by the beta-lactamase-blocking agent clavulanic acid. Class A beta-lactamase which confers resistance to the beta-lactam antibiotics, including penicillins and cephalosporins, in E.coli strain JM109. Acts via hydrolysis of the beta-lactam ring. Has penicillin-, and cephalosporin-hydrolyzing activities. The protein is Beta-lactamase VEB-1 of Pseudomonas aeruginosa.